A 468-amino-acid chain; its full sequence is MTKTLPKDFIFGGATAAYQAEGATHTDGKGPVAWDKYLEDNYWYTAEPASDFYNRYPVDLKLSEEFGVNGIRISIAWSRIFPTGKGEVNPKGVEYYHNLFAECHKRHVEPFVTLHHFDTPEALHSNGDFLNRENIEHFVNYAELCFKEFSEVNYWTTFNEIGPIGDGQYLVGKFPPGIQYDLAKVFQSHHNMMVSHARAVKLFKDSGYSGEIGVVHALPTKYPFDANNPDDVRAAELEDIIHNKFILDATYLGKYSDKTMEGVNHILEVNGGELDLREEDFAALDAAKDLNDFLGINYYMSDWMQAFDGETEIIHNGKGEKGSSKYQIKGVGRRKAPVDVPKTDWDWIIFPQGLYDQIMRVKADYPNYKKIYITENGLGYKDEFVDNTVYDDGRIDYVKKHLEVISDAISDGANVKGYFMWSLMDVFSWSNGYEKRYGLFYVDFETQERYPKKSAYWYKKVAETQVIE.

Positions 19, 116, 159, 160, and 297 each coordinate D-galactose 6-phosphate. Glu-160 functions as the Proton donor in the catalytic mechanism. The Nucleophile role is filled by Glu-375. The D-galactose 6-phosphate site is built by Ser-428, Trp-429, Lys-435, and Tyr-437.

It belongs to the glycosyl hydrolase 1 family.

The catalysed reaction is a 6-phospho-beta-D-galactoside + H2O = D-galactose 6-phosphate + an alcohol. It functions in the pathway carbohydrate metabolism; lactose degradation; D-galactose 6-phosphate and beta-D-glucose from lactose 6-phosphate: step 1/1. The chain is 6-phospho-beta-galactosidase from Streptococcus pyogenes serotype M12 (strain MGAS2096).